We begin with the raw amino-acid sequence, 300 residues long: Protoheme IX farnesyltransferase (300 aa).

Helical transmembrane passes span 31–51 (VMSL…NSLH), 52–72 (PFIS…AGAI), 92–112 (IVRG…MAFF), 123–145 (FLSA…MWLK), 152–172 (IVIG…SVSG), 179–199 (VILF…LALF), 225–245 (ILIY…VGMS), 247–267 (IIYL…SISL), and 280–300 (FFAY…FCRV).

Belongs to the UbiA prenyltransferase family. Protoheme IX farnesyltransferase subfamily.

Its subcellular location is the cell inner membrane. It catalyses the reaction heme b + (2E,6E)-farnesyl diphosphate + H2O = Fe(II)-heme o + diphosphate. The protein operates within porphyrin-containing compound metabolism; heme O biosynthesis; heme O from protoheme: step 1/1. Converts heme B (protoheme IX) to heme O by substitution of the vinyl group on carbon 2 of heme B porphyrin ring with a hydroxyethyl farnesyl side group. The polypeptide is Protoheme IX farnesyltransferase (Rickettsia bellii (strain OSU 85-389)).